The following is a 139-amino-acid chain: Deoxyuridine 5'-triphosphate nucleotidohydrolase (139 aa).

Substrate is bound by residues 58 to 60, Asn71, 75 to 77, and Met85; these read RSG and LID.

The protein belongs to the dUTPase family. Requires Mg(2+) as cofactor.

It catalyses the reaction dUTP + H2O = dUMP + diphosphate + H(+). It participates in pyrimidine metabolism; dUMP biosynthesis; dUMP from dCTP (dUTP route): step 2/2. Functionally, this enzyme is involved in nucleotide metabolism: it produces dUMP, the immediate precursor of thymidine nucleotides and it decreases the intracellular concentration of dUTP so that uracil cannot be incorporated into DNA. This Gamma-proteobacterium EBAC31A08 protein is Deoxyuridine 5'-triphosphate nucleotidohydrolase.